Reading from the N-terminus, the 84-residue chain is ATPase-stabilizing factor 15 kDa protein (84 aa).

A compositionally biased stretch (basic and acidic residues) spans 1-18 (MTRTNKWTEREGKADPKY). A disordered region spans residues 1 to 84 (MTRTNKWTER…EQKFENVQKE (84 aa)). A phosphoserine mark is found at S28 and S69. Over residues 74–84 (HEQKFENVQKE) the composition is skewed to basic and acidic residues.

Belongs to the STF2 family.

The protein localises to the mitochondrion. Its subcellular location is the cytoplasm. In terms of biological role, found to stabilize, together with STF1, a complex of intrinsic ATPase inhibitor INH1 and proton-translocating ATPase (F(1)F(0)-ATPase) in mitochondrial membranes. Binds to the F0 part and may function to hold the ATPase inhibitor or STF1 on the F1 subunit. Also acts as a hydrophilins that enhances dry stress tolerance. Cell viability after desiccation and rehydration is due to the antioxidant capacity of the protein, which reduces the number of apoptotic cells during stress conditions by minimising the accumulation of reactive oxygen species (ROS) in the cells. The polypeptide is ATPase-stabilizing factor 15 kDa protein (STF2) (Saccharomyces cerevisiae (strain ATCC 204508 / S288c) (Baker's yeast)).